A 453-amino-acid chain; its full sequence is Ribulose bisphosphate carboxylase large chain (453 aa).

A propeptide spanning residues 1-2 is cleaved from the precursor; the sequence is MS. Pro3 is subject to N-acetylproline. Position 14 is an N6,N6,N6-trimethyllysine (Lys14). The substrate site is built by Asn123 and Thr173. Lys175 (proton acceptor) is an active-site residue. Residue Lys177 coordinates substrate. Lys201, Asp203, and Glu204 together coordinate Mg(2+). N6-carboxylysine is present on Lys201. The Proton acceptor role is filled by His294. Substrate-binding residues include Arg295, His327, and Ser379.

The protein belongs to the RuBisCO large chain family. Type I subfamily. As to quaternary structure, heterohexadecamer of 8 large chains and 8 small chains; disulfide-linked. The disulfide link is formed within the large subunit homodimers. The cofactor is Mg(2+). In terms of processing, the disulfide bond which can form in the large chain dimeric partners within the hexadecamer appears to be associated with oxidative stress and protein turnover.

It localises to the plastid. Its subcellular location is the chloroplast. The catalysed reaction is 2 (2R)-3-phosphoglycerate + 2 H(+) = D-ribulose 1,5-bisphosphate + CO2 + H2O. It carries out the reaction D-ribulose 1,5-bisphosphate + O2 = 2-phosphoglycolate + (2R)-3-phosphoglycerate + 2 H(+). RuBisCO catalyzes two reactions: the carboxylation of D-ribulose 1,5-bisphosphate, the primary event in carbon dioxide fixation, as well as the oxidative fragmentation of the pentose substrate in the photorespiration process. Both reactions occur simultaneously and in competition at the same active site. The chain is Ribulose bisphosphate carboxylase large chain from Hydnophytum formicarum (Ant plant).